We begin with the raw amino-acid sequence, 830 residues long: Leucine--tRNA ligase (830 aa).

The 'HIGH' region signature appears at 34 to 44; that stretch reads PYPSGNIHMGH. Positions 592-596 match the 'KMSKS' region motif; sequence KMSKS. Lys-595 serves as a coordination point for ATP.

This sequence belongs to the class-I aminoacyl-tRNA synthetase family.

It localises to the cytoplasm. It catalyses the reaction tRNA(Leu) + L-leucine + ATP = L-leucyl-tRNA(Leu) + AMP + diphosphate. The polypeptide is Leucine--tRNA ligase (Ehrlichia ruminantium (strain Gardel)).